Here is a 294-residue protein sequence, read N- to C-terminus: 4-hydroxy-tetrahydrodipicolinate synthase (294 aa).

Thr-45 contributes to the pyruvate binding site. The active-site Proton donor/acceptor is the Tyr-133. Lys-161 functions as the Schiff-base intermediate with substrate in the catalytic mechanism. Ile-203 provides a ligand contact to pyruvate.

It belongs to the DapA family. In terms of assembly, homotetramer; dimer of dimers.

It localises to the cytoplasm. The enzyme catalyses L-aspartate 4-semialdehyde + pyruvate = (2S,4S)-4-hydroxy-2,3,4,5-tetrahydrodipicolinate + H2O + H(+). It functions in the pathway amino-acid biosynthesis; L-lysine biosynthesis via DAP pathway; (S)-tetrahydrodipicolinate from L-aspartate: step 3/4. In terms of biological role, catalyzes the condensation of (S)-aspartate-beta-semialdehyde [(S)-ASA] and pyruvate to 4-hydroxy-tetrahydrodipicolinate (HTPA). The sequence is that of 4-hydroxy-tetrahydrodipicolinate synthase from Shewanella sp. (strain ANA-3).